Reading from the N-terminus, the 422-residue chain is Tyrosine--tRNA ligase (422 aa).

L-tyrosine is bound at residue Tyr37. Residues 42-51 (PTEESLHIGH) carry the 'HIGH' region motif. The L-tyrosine site is built by Tyr175 and Gln179. The short motif at 235 to 239 (KFGKT) is the 'KMSKS' region element. An ATP-binding site is contributed by Lys238. The region spanning 357–414 (KDLQEALVLTSLAQSRTQAKNMIISNSISINTEKIRKNHIFHEKDKLFGKFTLLSRGK) is the S4 RNA-binding domain.

It belongs to the class-I aminoacyl-tRNA synthetase family. TyrS type 1 subfamily. In terms of assembly, homodimer.

It is found in the cytoplasm. The catalysed reaction is tRNA(Tyr) + L-tyrosine + ATP = L-tyrosyl-tRNA(Tyr) + AMP + diphosphate + H(+). Its function is as follows. Catalyzes the attachment of tyrosine to tRNA(Tyr) in a two-step reaction: tyrosine is first activated by ATP to form Tyr-AMP and then transferred to the acceptor end of tRNA(Tyr). In Buchnera aphidicola subsp. Acyrthosiphon pisum (strain 5A), this protein is Tyrosine--tRNA ligase.